Consider the following 75-residue polypeptide: Protein Tlp homolog (75 aa).

A disordered region spans residues Lys48–Met75.

It belongs to the Tlp family.

This is Protein Tlp homolog from Clostridium botulinum (strain 657 / Type Ba4).